Consider the following 356-residue polypeptide: Protein pelota homolog (356 aa).

This sequence belongs to the eukaryotic release factor 1 family. Pelota subfamily. In terms of assembly, monomer. A divalent metal cation serves as cofactor.

The protein resides in the cytoplasm. Functionally, may function in recognizing stalled ribosomes, interact with stem-loop structures in stalled mRNA molecules, and effect endonucleolytic cleavage of the mRNA. May play a role in the release non-functional ribosomes and degradation of damaged mRNAs. Has endoribonuclease activity. This chain is Protein pelota homolog, found in Pyrococcus horikoshii (strain ATCC 700860 / DSM 12428 / JCM 9974 / NBRC 100139 / OT-3).